A 181-amino-acid polypeptide reads, in one-letter code: Peptide deformylase (181 aa).

Positions 104 and 146 each coordinate Fe cation. Residue E147 is part of the active site. Position 150 (H150) interacts with Fe cation.

This sequence belongs to the polypeptide deformylase family. Fe(2+) is required as a cofactor.

It catalyses the reaction N-terminal N-formyl-L-methionyl-[peptide] + H2O = N-terminal L-methionyl-[peptide] + formate. Removes the formyl group from the N-terminal Met of newly synthesized proteins. Requires at least a dipeptide for an efficient rate of reaction. N-terminal L-methionine is a prerequisite for activity but the enzyme has broad specificity at other positions. The sequence is that of Peptide deformylase from Helicobacter hepaticus (strain ATCC 51449 / 3B1).